We begin with the raw amino-acid sequence, 690 residues long: Guanylate cyclase soluble subunit alpha-1 (690 aa).

Phosphoserine is present on S266. A Guanylate cyclase domain is found at T480–E607.

It belongs to the adenylyl cyclase class-4/guanylyl cyclase family. In terms of assembly, the active enzyme is formed by a heterodimer of an alpha and a beta subunit. Heterodimer with GUCY1B1. It depends on Mg(2+) as a cofactor. Mn(2+) serves as cofactor.

It localises to the cytoplasm. It catalyses the reaction GTP = 3',5'-cyclic GMP + diphosphate. With respect to regulation, activated by nitric oxide in the presence of magnesium or manganese ions. This Rattus norvegicus (Rat) protein is Guanylate cyclase soluble subunit alpha-1 (Gucy1a1).